A 346-amino-acid polypeptide reads, in one-letter code: Phosphoribosylformylglycinamidine cyclo-ligase (346 aa).

It belongs to the AIR synthase family.

The protein resides in the cytoplasm. The enzyme catalyses 2-formamido-N(1)-(5-O-phospho-beta-D-ribosyl)acetamidine + ATP = 5-amino-1-(5-phospho-beta-D-ribosyl)imidazole + ADP + phosphate + H(+). It functions in the pathway purine metabolism; IMP biosynthesis via de novo pathway; 5-amino-1-(5-phospho-D-ribosyl)imidazole from N(2)-formyl-N(1)-(5-phospho-D-ribosyl)glycinamide: step 2/2. The protein is Phosphoribosylformylglycinamidine cyclo-ligase of Alteromonas mediterranea (strain DSM 17117 / CIP 110805 / LMG 28347 / Deep ecotype).